The following is a 235-amino-acid chain: Segregation and condensation protein A (235 aa).

Belongs to the ScpA family. In terms of assembly, component of a cohesin-like complex composed of ScpA, ScpB and the Smc homodimer, in which ScpA and ScpB bind to the head domain of Smc. The presence of the three proteins is required for the association of the complex with DNA.

It is found in the cytoplasm. Its function is as follows. Participates in chromosomal partition during cell division. May act via the formation of a condensin-like complex containing Smc and ScpB that pull DNA away from mid-cell into both cell halves. The chain is Segregation and condensation protein A from Streptococcus equi subsp. zooepidemicus (strain H70).